Here is a 669-residue protein sequence, read N- to C-terminus: Dymeclin (669 aa).

A lipid anchor (N-myristoyl glycine) is attached at G2.

The protein belongs to the dymeclin family. In terms of processing, myristoylated in vitro; myristoylation is not essential for protein targeting to Golgi compartment.

It localises to the cytoplasm. The protein resides in the golgi apparatus. Its function is as follows. Necessary for correct organization of Golgi apparatus. In Xenopus laevis (African clawed frog), this protein is Dymeclin (dym).